The following is a 352-amino-acid chain: N-lysine methyltransferase KMT5A (352 aa).

The tract at residues A21–Q51 is disordered. S59 is subject to Phosphoserine. The disordered stretch occupies residues P87–E202. Residues M109 to R121 show a composition bias toward basic and acidic residues. T140 carries the post-translational modification Phosphothreonine. Basic residues predominate over residues G156–Q172. Positions E216–G337 constitute an SET domain. Residues K226–R228, Y271, and N298–H299 each bind S-adenosyl-L-methionine.

It belongs to the class V-like SAM-binding methyltransferase superfamily. Histone-lysine methyltransferase family. PR/SET subfamily. Interacts with L3MBTL1. Interacts with SIRT2 (phosphorylated form); the interaction is direct, stimulates KMT5A-mediated methyltransferase activity at histone H4 'Lys-20' (H4K20me1) and is increased in a H(2)O(2)-induced oxidative stress-dependent manner. Post-translationally, ubiquitinated and degraded by the DCX(DTL) complex.

It is found in the nucleus. The protein resides in the chromosome. The enzyme catalyses L-lysyl(20)-[histone H4] + S-adenosyl-L-methionine = N(6)-methyl-L-lysyl(20)-[histone H4] + S-adenosyl-L-homocysteine + H(+). It catalyses the reaction L-lysyl-[protein] + S-adenosyl-L-methionine = N(6)-methyl-L-lysyl-[protein] + S-adenosyl-L-homocysteine + H(+). Protein-lysine N-methyltransferase that monomethylates both histones and non-histone proteins. Specifically monomethylates 'Lys-20' of histone H4 (H4K20me1). H4K20me1 is enriched during mitosis and represents a specific tag for epigenetic transcriptional repression. Mainly functions in euchromatin regions, thereby playing a central role in the silencing of euchromatic genes. Required for cell proliferation, probably by contributing to the maintenance of proper higher-order structure of DNA during mitosis. Involved in chromosome condensation and proper cytokinesis. Nucleosomes are preferred as substrate compared to free histones. Mediates monomethylation of p53/TP53 at 'Lys-382', leading to repress p53/TP53-target genes. Plays a negative role in TGF-beta response regulation and a positive role in cell migration. This is N-lysine methyltransferase KMT5A from Bos taurus (Bovine).